A 1365-amino-acid chain; its full sequence is Serine-aspartate repeat-containing protein D (1365 aa).

The signal sequence occupies residues 1–35 (MLNRENKTAITRKGMVSNRLNKFSIRKYTVGTASI). A YSIRK-G/S signaling motif motif is present at residues 23–34 (FSIRKYTVGTAS). Positions 36-568 (LVGTTLIFGL…NNQSGGAGQE (533 aa)) are ligand binding A region. The interval 54 to 185 (ESTNKELNEA…NKKVDAKTES (132 aa)) is disordered. Polar residues-rich tracts occupy residues 62–71 (EATTSASDNQ) and 94–109 (EMVS…NGNK). Residues 130–145 (KSDEQASPKSTNEDLN) show a composition bias toward basic and acidic residues. Composition is skewed to polar residues over residues 146 to 155 (TKQTISNQEA) and 163 to 173 (NKSVVNAQPTN). A compositionally biased stretch (basic and acidic residues) spans 174–183 (EENKKVDAKT). 5 consecutive CNA-B domains span residues 569–680 (VYKI…IYKP), 681–791 (KYNL…YKTP), 792–901 (KYNL…FYKP), 902–1012 (TYNL…YKTP), and 1013–1123 (KYSL…EEDT). Disordered stretches follow at residues 857–884 (ETPS…STTG), 972–991 (YTPT…NGLT), and 1078–1341 (EKPA…SNNA). Polar residues-rich tracts occupy residues 860-869 (SGYTPTQVGS) and 972-981 (YTPTSVTSGN). Composition is skewed to acidic residues over residues 1091–1101 (TEDDKDADGGE) and 1118–1304 (YFEE…DSDS). The LPXTG sorting signal motif lies at 1328-1332 (LPETG). A Pentaglycyl murein peptidoglycan amidated threonine modification is found at T1331. Residues 1332 to 1365 (GNENSGSNNATLFGGLFAALGSLLLFGRRKKQNK) constitute a propeptide, removed by sortase.

This sequence belongs to the serine-aspartate repeat-containing protein (SDr) family. As to quaternary structure, interacts with host DSG1; this interaction increases S.aureus adherence to keratinocytes.

Its subcellular location is the secreted. The protein localises to the cell wall. Functionally, cell surface-associated calcium-binding protein which plays an important role in adhesion and pathogenesis. Mediates interactions with components of the extracellular matrix such as host DSG1 to promote bacterial adhesion to host cells. Contributes to the resistance to killing by innate immune components such as neutrophils present in blood and thus attenuates bacterial clearance. The protein is Serine-aspartate repeat-containing protein D (sdrD) of Staphylococcus aureus (strain MSSA476).